The following is a 1342-amino-acid chain: DNA-directed RNA polymerase subunit beta (1342 aa).

It belongs to the RNA polymerase beta chain family. As to quaternary structure, the RNAP catalytic core consists of 2 alpha, 1 beta, 1 beta' and 1 omega subunit. When a sigma factor is associated with the core the holoenzyme is formed, which can initiate transcription.

The enzyme catalyses RNA(n) + a ribonucleoside 5'-triphosphate = RNA(n+1) + diphosphate. Its function is as follows. DNA-dependent RNA polymerase catalyzes the transcription of DNA into RNA using the four ribonucleoside triphosphates as substrates. This is DNA-directed RNA polymerase subunit beta from Buchnera aphidicola subsp. Acyrthosiphon pisum (strain 5A).